The following is a 379-amino-acid chain: Cytochrome b (379 aa).

The next 4 helical transmembrane spans lie at 33–53 (FGSL…FLAM), 77–98 (WLIR…FIHV), 113–133 (WNIG…GYVL), and 178–198 (FFAF…VHLL). Positions 83 and 97 each coordinate heme b. Heme b contacts are provided by histidine 182 and histidine 196. Residue histidine 201 participates in a ubiquinone binding. A run of 4 helical transmembrane segments spans residues 226 to 246 (IKDL…ALFF), 288 to 308 (LGGV…PLLN), 320 to 340 (ITQT…WIGG), and 347 to 367 (FTTI…IIMP).

The protein belongs to the cytochrome b family. In terms of assembly, the cytochrome bc1 complex contains 11 subunits: 3 respiratory subunits (MT-CYB, CYC1 and UQCRFS1), 2 core proteins (UQCRC1 and UQCRC2) and 6 low-molecular weight proteins (UQCRH/QCR6, UQCRB/QCR7, UQCRQ/QCR8, UQCR10/QCR9, UQCR11/QCR10 and a cleavage product of UQCRFS1). This cytochrome bc1 complex then forms a dimer. Requires heme b as cofactor.

The protein resides in the mitochondrion inner membrane. Its function is as follows. Component of the ubiquinol-cytochrome c reductase complex (complex III or cytochrome b-c1 complex) that is part of the mitochondrial respiratory chain. The b-c1 complex mediates electron transfer from ubiquinol to cytochrome c. Contributes to the generation of a proton gradient across the mitochondrial membrane that is then used for ATP synthesis. The sequence is that of Cytochrome b (MT-CYB) from Deltamys kempi (Kemp's grass mouse).